Reading from the N-terminus, the 160-residue chain is Cytochrome b6-f complex subunit 4 (160 aa).

3 consecutive transmembrane segments (helical) span residues 36 to 56 (LLYI…GLAV), 95 to 115 (LLGV…PFLE), and 131 to 151 (TVFL…AMPI).

Belongs to the cytochrome b family. PetD subfamily. In terms of assembly, the 4 large subunits of the cytochrome b6-f complex are cytochrome b6, subunit IV (17 kDa polypeptide, petD), cytochrome f and the Rieske protein, while the 4 small subunits are petG, petL, petM and petN. The complex functions as a dimer.

The protein localises to the plastid. It is found in the chloroplast thylakoid membrane. Component of the cytochrome b6-f complex, which mediates electron transfer between photosystem II (PSII) and photosystem I (PSI), cyclic electron flow around PSI, and state transitions. The protein is Cytochrome b6-f complex subunit 4 of Zygnema circumcarinatum (Green alga).